Consider the following 1657-residue polypeptide: MDSKKRSSTEAEGSKERGLVHIWQAGSFPITPERLPGWGGKTVLQAALGVKHGVLLTEDGEVYSFGTLPWRSGPVEICPSSPILENALVGQYVITVATGSFHSGAVTDNGVAYMWGENSAGQCAVANQQYVPEPNPVSIADSEASPLLAVRILQLACGEEHTLALSISREIWAWGTGCQLGLITTAFPVTKPQKVEHLAGRVVLQVACGAFHSLALVQCLPSQDLKPVPERCNQCSQLLITMTDKEDHVIISDSHCCPLGVTLTESQAENHASTALSPSTETLDRQEEVFENTLVANDQSVATELNAVSAQITSSDAMSSQQNVMGTTEISSARNIPSYPDTQAVNEYLRKLSDHSVREDSEHGEKPVPSQPLLEEAIPNLHSPPTTSTSALNSLVVSCASAVGVRVAATYEAGALSLKKVMNFYSTTPCETGAQAGSSAIGPEGLKDSREEQVKQESMQGKKSSSLVDIREEETEGGSRRLSLPGLLSQVSPRLLRKAARVKTRTVVLTPTYSGEADALLPSLRTEVWTWGKGKEGQLGHGDVLPRLQPLCVKCLDGKEVIHLEAGGYHSLALTAKSQVYSWGSNTFGQLGHSDFPTTVPRLAKISSENGVWSIAAGRDYSLFLVDTEDFQPGLYYSGRQDPTEGDNLPENHSGSKTPVLLSCSKLGYISRVTAGKDSYLALVDKNIMGYIASLHELATTERRFYSKLSDIKSQILRPLLSLENLGTTTTVQLLQEVASRFSKLCYLIGQHGASLSSFLHGVKEARSLVILKHSSLFLDSYTEYCTSITNFLVMGGFQLLAKPAIDFLNKNQELLQDLSEVNDENTQLMEILNTLFFLPIRRLHNYAKVLLKLATCFEVASPEYQKLQDSSSCYECLALHLGRKRKEAEYTLGFWKTFPGKMTDSLRKPERRLLCESSNRALSLQHAGRFSVNWFILFNDALVHAQFSTHHVFPLATLWAEPLSEEAGGVNGLKITTPEEQFTLISSTPQEKTKWLRAISQAVDQALRGMSDLPPYGSGSSVQRQEPPISRSAKYTFYKDPRLKDATYDGRWLSGKPHGRGVLKWPDGKMYSGMFRNGLEDGYGEYRIPNKAMNKEDHYVGHWKEGKMCGQGVYSYASGEVFEGCFQDNMRHGHGLLRSGKLTSSSPSMFIGQWVMDKKAGYGVFDDITRGEKYMGMWQDDVCQGNGVVVTQFGLYYEGNFHLNKMMGNGVLLSEDDTIYEGEFSDDWTLSGKGTLTMPNGDYIEGYFSGEWGSGIKITGTYFKPSLYESDKDRPKVFRKLGNLAVPADEKWKAVFDECWRQLGCEGPGQGEVWKAWDNIAVALTTSRRQHRDSPEILSRSQTQTLESLEFIPQHVGAFSVEKYDDIRKYLIKACDTPLHPLGRLVETLVAVYRMTYVGVGANRRLLQEAVKEIKSYLKRIFQLVRFLFPELPEEGSTIPLSAPLPTERKSFCTGKSDSRSESPEPGYVVTSSGLLLPVLLPRLYPPLFMLYALDNDREEDIYWECVLRLNKQPDIALLGFLGVQRKFWPATLSILGESKKVLPTTKDACFASAVECLQQISTTFTPSDKLKVIQQTFEEISQSVLASLHEDFLWSMDDLFPVFLYVVLRARIRNLGSEVHLIEDLMDPYLQHGEQGIMFTTLKACYYQIQREKLN.

3 RCC1 repeats span residues 59–108 (DGEV…AVTD), 109–167 (NGVA…ALSI), and 169–218 (REIW…ALVQ). The tract at residues 432–480 (TGAQAGSSAIGPEGLKDSREEQVKQESMQGKKSSSLVDIREEETEGGSR) is disordered. The segment covering 445 to 455 (GLKDSREEQVK) has biased composition (basic and acidic residues). Positions 456-467 (QESMQGKKSSSL) are enriched in polar residues. A phosphoserine mark is found at S465, S466, S483, and S492. A Phosphothreonine modification is found at T510. RCC1 repeat units lie at residues 525–576 (RTEV…ALTA) and 578–627 (SQVY…FLVD). At K533 the chain carries N6-acetyllysine. Residues 690–885 (GYIASLHELA…ECLALHLGRK (196 aa)) form the DH domain. In terms of domain architecture, PH spans 901-1007 (GKMTDSLRKP…RAISQAVDQA (107 aa)). 8 MORN repeats span residues 1049–1071 (YDGR…DGKM), 1072–1094 (YSGM…NKAM), 1100–1122 (YVGH…SGEV), 1123–1145 (FEGC…KLTS), 1151–1173 (FIGQ…TRGE), 1175–1197 (YMGM…FGLY), 1198–1220 (YEGN…DDTI), and 1221–1244 (YEGE…NGDY). A Phosphoserine modification is found at S1335. The VPS9 domain occupies 1513 to 1657 (KQPDIALLGF…YYQIQREKLN (145 aa)).

As to quaternary structure, forms a heteromeric complex with ALS2CL. Interacts with ALS2CL.

Its function is as follows. May act as a GTPase regulator. Controls survival and growth of spinal motoneurons. The protein is Alsin (ALS2) of Homo sapiens (Human).